A 399-amino-acid chain; its full sequence is S-adenosylmethionine synthase (399 aa).

Position 17 (His-17) interacts with ATP. Residue Asp-19 coordinates Mg(2+). Residue Glu-45 participates in K(+) binding. L-methionine contacts are provided by Glu-58 and Gln-101. The interval 101 to 111 (QSADIAMGVDQ) is flexible loop. ATP contacts are provided by residues 177–179 (DGK), 244–245 (RF), Asp-253, 259–260 (RK), Ala-276, and Lys-280. An L-methionine-binding site is contributed by Asp-253. Residue Lys-284 participates in L-methionine binding.

This sequence belongs to the AdoMet synthase family. As to quaternary structure, homotetramer; dimer of dimers. The cofactor is Mg(2+). K(+) is required as a cofactor.

The protein resides in the cytoplasm. The enzyme catalyses L-methionine + ATP + H2O = S-adenosyl-L-methionine + phosphate + diphosphate. Its pathway is amino-acid biosynthesis; S-adenosyl-L-methionine biosynthesis; S-adenosyl-L-methionine from L-methionine: step 1/1. Its function is as follows. Catalyzes the formation of S-adenosylmethionine (AdoMet) from methionine and ATP. The overall synthetic reaction is composed of two sequential steps, AdoMet formation and the subsequent tripolyphosphate hydrolysis which occurs prior to release of AdoMet from the enzyme. The protein is S-adenosylmethionine synthase of Bacillus anthracis (strain A0248).